A 346-amino-acid polypeptide reads, in one-letter code: Methylthioribose-1-phosphate isomerase (346 aa).

Substrate contacts are provided by residues 47–49 (RGA), Arg88, and Gln195. Asp236 acts as the Proton donor in catalysis. 246-247 (NK) provides a ligand contact to substrate.

The protein belongs to the eIF-2B alpha/beta/delta subunits family. MtnA subfamily.

It catalyses the reaction 5-(methylsulfanyl)-alpha-D-ribose 1-phosphate = 5-(methylsulfanyl)-D-ribulose 1-phosphate. It functions in the pathway amino-acid biosynthesis; L-methionine biosynthesis via salvage pathway; L-methionine from S-methyl-5-thio-alpha-D-ribose 1-phosphate: step 1/6. Its function is as follows. Catalyzes the interconversion of methylthioribose-1-phosphate (MTR-1-P) into methylthioribulose-1-phosphate (MTRu-1-P). In Maridesulfovibrio salexigens (strain ATCC 14822 / DSM 2638 / NCIMB 8403 / VKM B-1763) (Desulfovibrio salexigens), this protein is Methylthioribose-1-phosphate isomerase.